A 145-amino-acid chain; its full sequence is Large ribosomal subunit protein uL16 (145 aa).

Residues 1–21 (MLVPTRVKHRKQHRGRMHGKA) show a composition bias toward basic residues. The segment at 1 to 22 (MLVPTRVKHRKQHRGRMHGKAT) is disordered.

This sequence belongs to the universal ribosomal protein uL16 family. Part of the 50S ribosomal subunit.

Its function is as follows. Binds 23S rRNA and is also seen to make contacts with the A and possibly P site tRNAs. This is Large ribosomal subunit protein uL16 from Desulfitobacterium hafniense (strain Y51).